Consider the following 267-residue polypeptide: Large ribosomal subunit protein uL4 (267 aa).

This sequence belongs to the universal ribosomal protein uL4 family. As to quaternary structure, part of the 50S ribosomal subunit.

Functionally, one of the primary rRNA binding proteins, this protein initially binds near the 5'-end of the 23S rRNA. It is important during the early stages of 50S assembly. It makes multiple contacts with different domains of the 23S rRNA in the assembled 50S subunit and ribosome. Forms part of the polypeptide exit tunnel. The protein is Large ribosomal subunit protein uL4 of Saccharolobus islandicus (strain M.16.27) (Sulfolobus islandicus).